The sequence spans 236 residues: Peroxisomal membrane protein PMP27 (236 aa).

The protein belongs to the peroxin-11 family. In terms of assembly, homooligomer. Interacts with PEX34.

It localises to the peroxisome membrane. Functionally, involved in peroxisomal proliferation. Promotes peroxisome division and biogenesis. This chain is Peroxisomal membrane protein PMP27 (PEX11), found in Saccharomyces cerevisiae (strain ATCC 204508 / S288c) (Baker's yeast).